The chain runs to 448 residues: MPGLKRILTVTILALWLPHPGNAQQQCTNGFDLDRQSGQCLDIDECRTIPEACRGDMMCVNQNGGYLCIPRTNPVYRGPYSNPYSTSYSGPYPAAAPPVPASNYPTISRPLVCRFGYQMDEGNQCVDVDECATDSHQCNPTQICINTEGGYTCSCTDGYWLLEGQCLDIDECRYGYCQQLCANVPGSYSCTCNPGFTLNDDGRSCQDVNECETENPCVQTCVNTYGSFICRCDPGYELEEDGIHCSDMDECSFSEFLCQHECVNQPGSYFCSCPPGYVLLDDNRSCQDINECEHRNHTCTSLQTCYNLQGGFKCIDPISCEEPYLLIGENRCMCPAEHTSCRDQPFTILYRDMDVVSGRSVPADIFQMQATTRYPGAYYIFQIKSGNEGREFYMRQTGPISATLVMTRPIKGPRDIQLDLEMITVNTVINFRGSSVIRLRIYVSQYPF.

The first 23 residues, 1 to 23 (MPGLKRILTVTILALWLPHPGNA), serve as a signal peptide directing secretion. The EGF-like 1; calcium-binding domain occupies 42–82 (DIDECRTIPEACRGDMMCVNQNGGYLCIPRTNPVYRGPYSN). 17 cysteine pairs are disulfide-bonded: Cys-46–Cys-59, Cys-53–Cys-68, Cys-131–Cys-144, Cys-138–Cys-153, Cys-155–Cys-166, Cys-172–Cys-181, Cys-177–Cys-190, Cys-192–Cys-205, Cys-211–Cys-221, Cys-217–Cys-230, Cys-232–Cys-245, Cys-251–Cys-262, Cys-258–Cys-271, Cys-273–Cys-286, Cys-292–Cys-305, Cys-299–Cys-314, and Cys-320–Cys-332. The Cell attachment site motif lies at 54–56 (RGD). The 41-residue stretch at 127–167 (DVDECATDSHQCNPTQICINTEGGYTCSCTDGYWLLEGQCL) folds into the EGF-like 2; calcium-binding domain. The region spanning 168–206 (DIDECRYGYCQQLCANVPGSYSCTCNPGFTLNDDGRSCQ) is the EGF-like 3; calcium-binding domain. In terms of domain architecture, EGF-like 4; calcium-binding spans 207 to 246 (DVNECETENPCVQTCVNTYGSFICRCDPGYELEEDGIHCS). Residues 245-448 (CSDMDECSFS…LRIYVSQYPF (204 aa)) form an interaction with LOXL1 region. An EGF-like 5; calcium-binding domain is found at 247 to 287 (DMDECSFSEFLCQHECVNQPGSYFCSCPPGYVLLDDNRSCQ). 2 N-linked (GlcNAc...) asparagine glycosylation sites follow: Asn-283 and Asn-296. In terms of domain architecture, EGF-like 6; calcium-binding spans 288–333 (DINECEHRNHTCTSLQTCYNLQGGFKCIDPISCEEPYLLIGENRCM).

It belongs to the fibulin family. As to quaternary structure, homodimer. Monomer, homodimerizes in presence of Ca(2+). Interacts with ELN. Interacts (via N-terminus) with the integrins ITGAV/ITGB3, ITGAV/ITGB5 and ITGA9/ITGB1. Interacts with FBN1 (via N-terminal domain). Forms a ternary complex with ELN and FBN1. Interacts with EFEMP2 with moderate affinity. Interacts with LOXL1. N-glycosylated.

Its subcellular location is the secreted. The protein localises to the extracellular space. The protein resides in the extracellular matrix. Essential for elastic fiber formation, is involved in the assembly of continuous elastin (ELN) polymer and promotes the interaction of microfibrils and ELN. Stabilizes and organizes elastic fibers in the skin, lung and vasculature. Promotes adhesion of endothelial cells through interaction of integrins and the RGD motif. Vascular ligand for integrin receptors which may play a role in vascular development and remodeling. May act as an adapter that mediates the interaction between FBN1 and ELN. This Mus musculus (Mouse) protein is Fibulin-5 (Fbln5).